A 29-amino-acid chain; its full sequence is Conotoxin Bu17 (29 aa).

3 cysteine pairs are disulfide-bonded: C4–C19, C5–C25, and C15–C26. C26 bears the Cysteine amide mark.

It belongs to the conotoxin M superfamily. Expressed by the venom duct.

It localises to the secreted. The protein is Conotoxin Bu17 of Conus bullatus (Bubble cone).